The following is a 1219-amino-acid chain: ATP-dependent helicase/nuclease subunit A (1219 aa).

A UvrD-like helicase ATP-binding domain is found at threonine 12–arginine 477. Alanine 33–threonine 40 serves as a coordination point for ATP. The region spanning glutamate 478–glycine 786 is the UvrD-like helicase C-terminal domain. The segment at proline 997–threonine 1016 is disordered. Positions glutamate 1004–threonine 1016 are enriched in basic and acidic residues.

Belongs to the helicase family. AddA subfamily. In terms of assembly, heterodimer of AddA and AddB/RexB. Requires Mg(2+) as cofactor.

The catalysed reaction is Couples ATP hydrolysis with the unwinding of duplex DNA by translocating in the 3'-5' direction.. It catalyses the reaction ATP + H2O = ADP + phosphate + H(+). The heterodimer acts as both an ATP-dependent DNA helicase and an ATP-dependent, dual-direction single-stranded exonuclease. Recognizes the chi site generating a DNA molecule suitable for the initiation of homologous recombination. The AddA nuclease domain is required for chi fragment generation; this subunit has the helicase and 3' -&gt; 5' nuclease activities. The chain is ATP-dependent helicase/nuclease subunit A from Staphylococcus saprophyticus subsp. saprophyticus (strain ATCC 15305 / DSM 20229 / NCIMB 8711 / NCTC 7292 / S-41).